A 605-amino-acid chain; its full sequence is Arginine--tRNA ligase (605 aa).

The short motif at 131–141 (ANPTGPMHVGH) is the 'HIGH' region element. A disordered region spans residues 290–309 (PPPKSKKGQPAPAQAASNSA). Low complexity predominate over residues 298–309 (QPAPAQAASNSA).

It belongs to the class-I aminoacyl-tRNA synthetase family. As to quaternary structure, monomer.

It localises to the cytoplasm. The enzyme catalyses tRNA(Arg) + L-arginine + ATP = L-arginyl-tRNA(Arg) + AMP + diphosphate. The chain is Arginine--tRNA ligase from Anaeromyxobacter sp. (strain Fw109-5).